The chain runs to 337 residues: Adenine deaminase (337 aa).

Zn(2+)-binding residues include H17, H19, and H197. E200 acts as the Proton donor in catalysis. A Zn(2+)-binding site is contributed by D278. Residue D279 coordinates substrate.

It belongs to the metallo-dependent hydrolases superfamily. Adenosine and AMP deaminases family. Adenine deaminase type 2 subfamily. Zn(2+) serves as cofactor.

It carries out the reaction adenine + H2O + H(+) = hypoxanthine + NH4(+). Functionally, catalyzes the hydrolytic deamination of adenine to hypoxanthine. Plays an important role in the purine salvage pathway and in nitrogen catabolism. The protein is Adenine deaminase of Zymomonas mobilis subsp. mobilis (strain ATCC 31821 / ZM4 / CP4).